Reading from the N-terminus, the 224-residue chain is 7-cyano-7-deazaguanine synthase (224 aa).

9–19 (ISGGMDSTLCA) is a binding site for ATP. Zn(2+) contacts are provided by cysteine 190, cysteine 198, cysteine 201, and cysteine 204.

It belongs to the QueC family. Zn(2+) serves as cofactor.

The catalysed reaction is 7-carboxy-7-deazaguanine + NH4(+) + ATP = 7-cyano-7-deazaguanine + ADP + phosphate + H2O + H(+). The protein operates within purine metabolism; 7-cyano-7-deazaguanine biosynthesis. Its function is as follows. Catalyzes the ATP-dependent conversion of 7-carboxy-7-deazaguanine (CDG) to 7-cyano-7-deazaguanine (preQ(0)). The chain is 7-cyano-7-deazaguanine synthase from Campylobacter jejuni (strain RM1221).